The primary structure comprises 396 residues: Elongation factor Tu (396 aa).

In terms of domain architecture, tr-type G spans 10–206; it reads KPHVNVGTIG…ALDTYIPTPE (197 aa). The segment at 19 to 26 is G1; the sequence is GHVDHGKT. 19 to 26 contacts GTP; that stretch reads GHVDHGKT. Thr26 provides a ligand contact to Mg(2+). Residues 60-64 are G2; it reads GITIN. A G3 region spans residues 81 to 84; sequence DCPG. Residues 81–85 and 136–139 contribute to the GTP site; these read DCPGH and NKCD. The interval 136–139 is G4; the sequence is NKCD. The interval 174-176 is G5; sequence SAK.

This sequence belongs to the TRAFAC class translation factor GTPase superfamily. Classic translation factor GTPase family. EF-Tu/EF-1A subfamily. Monomer.

It localises to the cytoplasm. It carries out the reaction GTP + H2O = GDP + phosphate + H(+). GTP hydrolase that promotes the GTP-dependent binding of aminoacyl-tRNA to the A-site of ribosomes during protein biosynthesis. This chain is Elongation factor Tu, found in Paraburkholderia xenovorans (strain LB400).